A 437-amino-acid chain; its full sequence is Dolichyl-diphosphooligosaccharide--protein glycosyltransferase subunit wbp1 (437 aa).

Positions 1–19 are cleaved as a signal peptide; the sequence is MKSALCIALALTWSLLVQA. The Lumenal portion of the chain corresponds to 20–401; sequence ARQTVLAVAD…FPRFLPHAYP (382 aa). N-linked (GlcNAc...) asparagine glycosylation is found at asparagine 275 and asparagine 289. The helical transmembrane segment at 402 to 422 threads the bilayer; that stretch reads YYASCFSVLGAFLLFCGIWLL. The Cytoplasmic segment spans residues 423 to 437; that stretch reads QKPAKPVVPSAKKQN.

It belongs to the DDOST 48 kDa subunit family. As to quaternary structure, component of the oligosaccharyltransferase (OST) complex.

The protein resides in the endoplasmic reticulum. Its subcellular location is the membrane. The protein operates within protein modification; protein glycosylation. Subunit of the oligosaccharyl transferase (OST) complex that catalyzes the initial transfer of a defined glycan (Glc(3)Man(9)GlcNAc(2) in eukaryotes) from the lipid carrier dolichol-pyrophosphate to an asparagine residue within an Asn-X-Ser/Thr consensus motif in nascent polypeptide chains, the first step in protein N-glycosylation. N-glycosylation occurs cotranslationally and the complex associates with the Sec61 complex at the channel-forming translocon complex that mediates protein translocation across the endoplasmic reticulum (ER). All subunits are required for a maximal enzyme activity. This Schizosaccharomyces pombe (strain 972 / ATCC 24843) (Fission yeast) protein is Dolichyl-diphosphooligosaccharide--protein glycosyltransferase subunit wbp1 (wbp1).